We begin with the raw amino-acid sequence, 213 residues long: Protein-L-isoaspartate O-methyltransferase (213 aa).

The active site involves Ser-60.

This sequence belongs to the methyltransferase superfamily. L-isoaspartyl/D-aspartyl protein methyltransferase family.

The protein resides in the cytoplasm. The catalysed reaction is [protein]-L-isoaspartate + S-adenosyl-L-methionine = [protein]-L-isoaspartate alpha-methyl ester + S-adenosyl-L-homocysteine. Functionally, catalyzes the methyl esterification of L-isoaspartyl residues in peptides and proteins that result from spontaneous decomposition of normal L-aspartyl and L-asparaginyl residues. It plays a role in the repair and/or degradation of damaged proteins. This Roseobacter denitrificans (strain ATCC 33942 / OCh 114) (Erythrobacter sp. (strain OCh 114)) protein is Protein-L-isoaspartate O-methyltransferase.